A 242-amino-acid polypeptide reads, in one-letter code: Protein GrpE (242 aa).

Disordered stretches follow at residues 1 to 75 (MSDD…DDEL) and 93 to 136 (VADL…QQIK). Positions 23 to 37 (DAESSAAEDASAADD) are enriched in low complexity. Over residues 38-49 (AAPEESTGDEQA) the composition is skewed to acidic residues. The segment covering 50–64 (GETTAESSDAESVTV) has biased composition (polar residues). The segment covering 96–108 (LETERDEAEETAS) has biased composition (acidic residues). Basic residues predominate over residues 124–133 (YKKRAKKRQQ).

The protein belongs to the GrpE family. In terms of assembly, homodimer.

The protein localises to the cytoplasm. Functionally, participates actively in the response to hyperosmotic and heat shock by preventing the aggregation of stress-denatured proteins, in association with DnaK and GrpE. It is the nucleotide exchange factor for DnaK and may function as a thermosensor. Unfolded proteins bind initially to DnaJ; upon interaction with the DnaJ-bound protein, DnaK hydrolyzes its bound ATP, resulting in the formation of a stable complex. GrpE releases ADP from DnaK; ATP binding to DnaK triggers the release of the substrate protein, thus completing the reaction cycle. Several rounds of ATP-dependent interactions between DnaJ, DnaK and GrpE are required for fully efficient folding. This is Protein GrpE from Haloferax mediterranei (strain ATCC 33500 / DSM 1411 / JCM 8866 / NBRC 14739 / NCIMB 2177 / R-4) (Halobacterium mediterranei).